The following is a 335-amino-acid chain: Large ribosomal subunit protein uL3 (335 aa).

The protein belongs to the universal ribosomal protein uL3 family. In terms of assembly, part of the 50S ribosomal subunit. Forms a cluster with proteins L14 and L24e.

One of the primary rRNA binding proteins, it binds directly near the 3'-end of the 23S rRNA, where it nucleates assembly of the 50S subunit. This chain is Large ribosomal subunit protein uL3, found in Methanocaldococcus jannaschii (strain ATCC 43067 / DSM 2661 / JAL-1 / JCM 10045 / NBRC 100440) (Methanococcus jannaschii).